The following is a 231-amino-acid chain: uncharacterized protein (231 aa).

The 113-residue stretch at 4-116 folds into the Response regulatory domain; the sequence is RILVVEDDED…ELHARVIAQL (113 aa). The residue at position 52 (aspartate 52) is a 4-aspartylphosphate. The segment at residues 129–230 is a DNA-binding region (ompR/PhoB-type); sequence EETFLIGGKL…EWGRGYRFGA (102 aa).

Phosphorylated by YrkQ.

It is found in the cytoplasm. Member of the two-component regulatory system YrkQ/YrkP. This is an uncharacterized protein from Bacillus subtilis (strain 168).